A 397-amino-acid chain; its full sequence is MSYKRVFVIVMDSVGTGAAHDAAKFDDVGSDTLGHVGEYYKGALKLPNLGKLGISNLRDTPIEGVPVADPAIGDYGKMEEISAGKDSMDGHWEMMGLPVMKPLSTFPNGFPQEIVDKLEKFSGRKVIVNKPYSGTEVIHDYGERQMETGELILYTSGDSVMQIAAHEDVIPVEELYKICEYARTLVNGPEYTVGRIIARPYVGPDKDHFTRTANRHDFSLKPIGETDMDRLRAAGYDVIGVGKINDIFSGEGIDKGYHNESNMDGMDHVDEVMKQDFTGFCFTNLVDFDAMYGHRRNPKGFGQALMDFDKRLGNVLDEMKPDDLLMITADHGNDPGFKGTDHTRENVPLLVYSPSMNKPNQSLGVRKTFSDLGATILENFNVEPVKGTSFYKEISND.

The Mn(2+) site is built by D12, D289, H294, D330, H331, and H342.

This sequence belongs to the phosphopentomutase family. Mn(2+) is required as a cofactor.

It localises to the cytoplasm. The catalysed reaction is 2-deoxy-alpha-D-ribose 1-phosphate = 2-deoxy-D-ribose 5-phosphate. It catalyses the reaction alpha-D-ribose 1-phosphate = D-ribose 5-phosphate. The protein operates within carbohydrate degradation; 2-deoxy-D-ribose 1-phosphate degradation; D-glyceraldehyde 3-phosphate and acetaldehyde from 2-deoxy-alpha-D-ribose 1-phosphate: step 1/2. Isomerase that catalyzes the conversion of deoxy-ribose 1-phosphate (dRib-1-P) and ribose 1-phosphate (Rib-1-P) to deoxy-ribose 5-phosphate (dRib-5-P) and ribose 5-phosphate (Rib-5-P), respectively. In Limosilactobacillus reuteri (strain DSM 20016) (Lactobacillus reuteri), this protein is Phosphopentomutase.